Here is a 1146-residue protein sequence, read N- to C-terminus: Sodium/hydrogen exchanger 7 (1146 aa).

Residues 1 to 28 (MTTVIDATMAYRFLEEATDSSSSSSSSK) are Extracellular-facing. Residues 29-49 (LESSPVDAVLFVGMSLVLGIA) traverse the membrane as a helical segment. At 50–58 (SRHLLRGTR) the chain is on the cytoplasmic side. A helical membrane pass occupies residues 59 to 79 (VPYTVALLVIGIALGSLEYGA). At 80 to 99 (KHNLGKIGHGIRIWNEIDPE) the chain is on the extracellular side. The chain crosses the membrane as a helical span at residues 100-120 (LLLAVFLPALLFESSFSMEVH). The Cytoplasmic segment spans residues 121–127 (QIKRCLG). The chain crosses the membrane as a helical span at residues 128–148 (QMVLLAVPGVLISTACLGSLV). The Extracellular segment spans residues 149 to 159 (KVTFPYEWDWK). A helical transmembrane segment spans residues 160–180 (TSLLLGGLLSATDPVAVVALL). The Cytoplasmic segment spans residues 181–191 (KELGASKKLST). A helical transmembrane segment spans residues 192-212 (IIEGESLMNDGTAIVVFQLFL). Residues 213–227 (KMAMGQNSDWSSIIK) are Extracellular-facing. A helical membrane pass occupies residues 228–250 (FLLKVALGAVGIGLAFGIASVIW). Residues 251 to 253 (LKF) lie on the Cytoplasmic side of the membrane. A helical transmembrane segment spans residues 254 to 273 (IFNDTVIEITLTIAVSYFAY). The Extracellular segment spans residues 274-278 (YTAQE). The chain crosses the membrane as a helical span at residues 279–299 (WAGASGVLTVMTLGMFYAAFA). Residues 300-313 (RTAFKGDSQKSLHH) lie on the Cytoplasmic side of the membrane. Residues 314 to 334 (FWEMVAYIANTLIFILSGVVI) traverse the membrane as a helical segment. The Extracellular segment spans residues 335 to 352 (AEGILDSDKIAYQGNSWR). Residues 353-373 (FLFLLYVYIQLSRVVVVGVLY) traverse the membrane as a helical segment. At 374–387 (PLLCRFGYGLDWKE) the chain is on the cytoplasmic side. A helical transmembrane segment spans residues 388-408 (SIILVWSGLRGAVALALSLSV). Topologically, residues 409-420 (KQSSGNSHISKE) are extracellular. The helical transmembrane segment at 421–441 (TGTLFLFFTGGIVFLTLIVNG) threads the bilayer. Topologically, residues 442 to 1146 (STTQFVLRLL…PSKIVFRNDL (705 aa)) are cytoplasmic. Disordered stretches follow at residues 981 to 1001 (LHRR…QLQR) and 1102 to 1128 (CQLP…DEDE). Residues 986–996 (SSLTPPRSSSS) show a composition bias toward low complexity. Positions 1109-1118 (ESSTRQNTMV) are enriched in polar residues.

This sequence belongs to the monovalent cation:proton antiporter 1 (CPA1) transporter (TC 2.A.36) family. As to quaternary structure, interacts with CIPK24/SOS2 and CBL4/SOS3. In terms of processing, phosphorylated by CIPK24/SOS2 in complex with CBL4/SOS3. In terms of tissue distribution, more expressed in roots than in shoots. Mostly localized in parenchyma cells at the xylem/symplast boundary in roots, hypocotyls, stems and leaves. Also present in root tips epidermal cells.

The protein resides in the cell membrane. It carries out the reaction Na(+)(in) + H(+)(out) = Na(+)(out) + H(+)(in). The enzyme catalyses K(+)(in) + H(+)(out) = K(+)(out) + H(+)(in). Its function is as follows. Acts in electroneutral exchange of protons for cations such as Na(+) or Li(+) across plasma membrane. Involved in Na(+) and K(+) homeostasis. Required for cytoplasmic Na(+) and Li(+) detoxification by secreting them from the cytoplasm to the extracellular space. Regulates Na(+) content of the xylem sap. In Arabidopsis thaliana (Mouse-ear cress), this protein is Sodium/hydrogen exchanger 7 (NHX7).